We begin with the raw amino-acid sequence, 389 residues long: MARFLVALLATTLVAVQAGGQLGHAAPATAEVFWRAVLPHSPLPDAVLRLLKQPAAGVELLTEATSFVRDAEDRPPFDYRDYSRSPPDDEPSKSTGAASGARDFDYDDYSGGDKLRGAASGARDFDYDDYSGADKLRGATDEYKAPSSSLAGNGASMARGGKAETTTVFFHEEAVRVGKRLPFRFPPATPAALGFLPRQVADSVPFTTAALPGVLATFGVASDSATVASMEATLRACESPTIAGESKFCATSLEALVERAMEVLGTRDIRPVTSTLPRAGAPLQTYTVRSVRPVEGGPVFVACHDEAYPYTVYRCHTTGPSRAYMVDMEGARGGDAVTIATVCHTDTSLWNPEHVSFKLLGTKPGGTPVCHLMPYGHIIWAKNVNRSPA.

Residues 1–20 form the signal peptide; the sequence is MARFLVALLATTLVAVQAGG. A compositionally biased stretch (basic and acidic residues) spans 73 to 92; the sequence is DRPPFDYRDYSRSPPDDEPS. Residues 73–105 form a disordered region; it reads DRPPFDYRDYSRSPPDDEPSKSTGAASGARDFD. Residues 169–383 enclose the BURP domain; that stretch reads FFHEEAVRVG…PYGHIIWAKN (215 aa).

As to expression, specifically expressed in anthers, in the tapetum and microspores (at protein level).

In terms of biological role, required for pollen development. Probably synthesized in the tapetum, packaged in Ubisch bodies and transported at appropriate stages to the micropsores. The protein is Protein RAFTIN 1A (RAFTIN1A) of Triticum aestivum (Wheat).